We begin with the raw amino-acid sequence, 269 residues long: Tryptophan synthase alpha chain (269 aa).

Residues glutamate 49 and aspartate 60 each act as proton acceptor in the active site.

It belongs to the TrpA family. Tetramer of two alpha and two beta chains.

It carries out the reaction (1S,2R)-1-C-(indol-3-yl)glycerol 3-phosphate + L-serine = D-glyceraldehyde 3-phosphate + L-tryptophan + H2O. The protein operates within amino-acid biosynthesis; L-tryptophan biosynthesis; L-tryptophan from chorismate: step 5/5. The alpha subunit is responsible for the aldol cleavage of indoleglycerol phosphate to indole and glyceraldehyde 3-phosphate. This chain is Tryptophan synthase alpha chain, found in Histophilus somni (strain 2336) (Haemophilus somnus).